A 292-amino-acid chain; its full sequence is 2-(5''-triphosphoribosyl)-3'-dephosphocoenzyme-A synthase (292 aa).

This sequence belongs to the CitG/MdcB family.

It catalyses the reaction 3'-dephospho-CoA + ATP = 2'-(5''-triphospho-alpha-D-ribosyl)-3'-dephospho-CoA + adenine. Its function is as follows. Catalyzes the formation of 2-(5''-triphosphoribosyl)-3'-dephosphocoenzyme-A, the precursor of the prosthetic group of the holo-acyl carrier protein (gamma chain) of citrate lyase, from ATP and dephospho-CoA. The sequence is that of 2-(5''-triphosphoribosyl)-3'-dephosphocoenzyme-A synthase from Escherichia coli (strain UTI89 / UPEC).